We begin with the raw amino-acid sequence, 210 residues long: TBC1 domain family member 28 (210 aa).

The Rab-GAP TBC domain occupies 101 to 210 (VIPLAVRGRA…WVSLGGVATS (110 aa)).

This Homo sapiens (Human) protein is TBC1 domain family member 28 (TBC1D28).